The primary structure comprises 279 residues: Tryptophan 2,3-dioxygenase (279 aa).

Residues 48-52 (FIVIH), Tyr110, and Arg114 each bind substrate. His237 is a binding site for heme. Thr251 is a binding site for substrate.

This sequence belongs to the tryptophan 2,3-dioxygenase family. Homotetramer. It depends on heme as a cofactor.

The enzyme catalyses L-tryptophan + O2 = N-formyl-L-kynurenine. It participates in amino-acid degradation; L-tryptophan degradation via kynurenine pathway; L-kynurenine from L-tryptophan: step 1/2. Functionally, heme-dependent dioxygenase that catalyzes the oxidative cleavage of the L-tryptophan (L-Trp) pyrrole ring and converts L-tryptophan to N-formyl-L-kynurenine. Catalyzes the oxidative cleavage of the indole moiety. The sequence is that of Tryptophan 2,3-dioxygenase from Bacillus thuringiensis subsp. konkukian (strain 97-27).